We begin with the raw amino-acid sequence, 366 residues long: Protein FAM110B (366 aa).

3 disordered regions span residues 127–150 (SSEG…HRDT), 163–182 (KVYP…HVSR), and 214–253 (IPCS…PSLQ). Residues serine 234 and serine 297 each carry the phosphoserine modification. A disordered region spans residues 313–333 (DCEQSQDSNSDLRNDDSANDR). Basic and acidic residues predominate over residues 322 to 331 (SDLRNDDSAN).

It belongs to the FAM110 family.

The protein localises to the cytoplasm. It localises to the cytoskeleton. It is found in the microtubule organizing center. The protein resides in the centrosome. This chain is Protein FAM110B (Fam110b), found in Rattus norvegicus (Rat).